The primary structure comprises 514 residues: Folylpolyglutamate synthase (514 aa).

Residue 82–85 (GKGS) participates in ATP binding. Mg(2+)-binding residues include Ser-107, Glu-186, and His-214. Residues Arg-339 and Asp-355 each contribute to the ATP site.

Belongs to the folylpolyglutamate synthase family. A monovalent cation serves as cofactor.

The protein resides in the mitochondrion inner membrane. It localises to the mitochondrion matrix. Its subcellular location is the cytoplasm. It carries out the reaction (6S)-5,6,7,8-tetrahydrofolyl-(gamma-L-Glu)(n) + L-glutamate + ATP = (6S)-5,6,7,8-tetrahydrofolyl-(gamma-L-Glu)(n+1) + ADP + phosphate + H(+). It functions in the pathway cofactor biosynthesis; tetrahydrofolylpolyglutamate biosynthesis. Functionally, catalyzes conversion of folates to polyglutamate derivatives allowing concentration of folate compounds in the cell and the intracellular retention of these cofactors, which are important substrates for most of the folate-dependent enzymes that are involved in one-carbon transfer reactions involved in purine, pyrimidine and amino acid synthesis. The polypeptide is Folylpolyglutamate synthase (MET7) (Candida albicans (Yeast)).